A 334-amino-acid chain; its full sequence is Beta-hexosaminidase (334 aa).

Residues Asp-60, Arg-68, Arg-133, and 163–164 (KH) contribute to the substrate site. Catalysis depends on His-176, which acts as the Proton donor/acceptor. The active-site Nucleophile is Asp-247.

This sequence belongs to the glycosyl hydrolase 3 family. NagZ subfamily.

It localises to the cytoplasm. The enzyme catalyses Hydrolysis of terminal non-reducing N-acetyl-D-hexosamine residues in N-acetyl-beta-D-hexosaminides.. It participates in cell wall biogenesis; peptidoglycan recycling. Plays a role in peptidoglycan recycling by cleaving the terminal beta-1,4-linked N-acetylglucosamine (GlcNAc) from peptide-linked peptidoglycan fragments, giving rise to free GlcNAc, anhydro-N-acetylmuramic acid and anhydro-N-acetylmuramic acid-linked peptides. The protein is Beta-hexosaminidase of Xanthomonas euvesicatoria pv. vesicatoria (strain 85-10) (Xanthomonas campestris pv. vesicatoria).